A 170-amino-acid chain; its full sequence is Peptide deformylase (170 aa).

Fe cation contacts are provided by Cys-94 and His-136. Glu-137 is a catalytic residue. Residue His-140 participates in Fe cation binding.

It belongs to the polypeptide deformylase family. It depends on Fe(2+) as a cofactor.

The enzyme catalyses N-terminal N-formyl-L-methionyl-[peptide] + H2O = N-terminal L-methionyl-[peptide] + formate. Functionally, removes the formyl group from the N-terminal Met of newly synthesized proteins. Requires at least a dipeptide for an efficient rate of reaction. N-terminal L-methionine is a prerequisite for activity but the enzyme has broad specificity at other positions. The protein is Peptide deformylase of Xylella fastidiosa (strain 9a5c).